The chain runs to 135 residues: Race-specific elicitor A4 (135 aa).

Residues 1–18 (MHYTTLLLSTLLVGTALA) form the signal peptide. Residues 19-29 (QPTNPPAKTPK) constitute a propeptide that is removed on maturation. The interval 19 to 39 (QPTNPPAKTPKKAPKTQPYNP) is disordered. Residues 47 to 111 (DTKCMGPKDC…DYPNLSTCPV (65 aa)) enclose the Chitin-binding type-2 domain. Residues cysteine 86 and cysteine 101 are joined by a disulfide bond. Residues 112 to 135 (KTPQPKPKKGGVGGKKASVGHPGY) form a disordered region.

Functionally, this necrosis-inducing peptide induces a hypersensitive response on Cf-4 tomato genotypes. Race-specific elicitors are compounds which only induce defense responses in genotypes of host plants which are resistant to the pathogenic race that produces the elicitor, but not in susceptible genotypes. The protein is Race-specific elicitor A4 (AVR4) of Passalora fulva (Tomato leaf mold).